The following is a 366-amino-acid chain: Aminomethyltransferase (366 aa).

It belongs to the GcvT family. The glycine cleavage system is composed of four proteins: P, T, L and H.

It catalyses the reaction N(6)-[(R)-S(8)-aminomethyldihydrolipoyl]-L-lysyl-[protein] + (6S)-5,6,7,8-tetrahydrofolate = N(6)-[(R)-dihydrolipoyl]-L-lysyl-[protein] + (6R)-5,10-methylene-5,6,7,8-tetrahydrofolate + NH4(+). Functionally, the glycine cleavage system catalyzes the degradation of glycine. The sequence is that of Aminomethyltransferase from Bordetella petrii (strain ATCC BAA-461 / DSM 12804 / CCUG 43448).